The primary structure comprises 240 residues: Orotidine 5'-phosphate decarboxylase (240 aa).

Residues Asp15, Lys37, 64–73 (DLKYHDIPNT), Thr127, Arg188, Gln197, Gly217, and Arg218 contribute to the substrate site. The active-site Proton donor is Lys66.

It belongs to the OMP decarboxylase family. Type 1 subfamily. In terms of assembly, homodimer.

It carries out the reaction orotidine 5'-phosphate + H(+) = UMP + CO2. Its pathway is pyrimidine metabolism; UMP biosynthesis via de novo pathway; UMP from orotate: step 2/2. In terms of biological role, catalyzes the decarboxylation of orotidine 5'-monophosphate (OMP) to uridine 5'-monophosphate (UMP). This Citrifermentans bemidjiense (strain ATCC BAA-1014 / DSM 16622 / JCM 12645 / Bem) (Geobacter bemidjiensis) protein is Orotidine 5'-phosphate decarboxylase.